A 144-amino-acid polypeptide reads, in one-letter code: MIALIQRVSQAKVNVKGETIGKIGKGLLVLLGVEKEDNREKADKLAEKVLNYRIFSDENDKMNLNVQQAQGELLIVSQFTLAADTQKGLRPSFSKGASPALANELYEYFIQKCAEKLPVSTGQFAADMQVSLTNDGPVTFWLNV.

The short motif at 136–137 (GP) is the Gly-cisPro motif, important for rejection of L-amino acids element.

Belongs to the DTD family. Homodimer.

Its subcellular location is the cytoplasm. It catalyses the reaction glycyl-tRNA(Ala) + H2O = tRNA(Ala) + glycine + H(+). The enzyme catalyses a D-aminoacyl-tRNA + H2O = a tRNA + a D-alpha-amino acid + H(+). An aminoacyl-tRNA editing enzyme that deacylates mischarged D-aminoacyl-tRNAs. Also deacylates mischarged glycyl-tRNA(Ala), protecting cells against glycine mischarging by AlaRS. Acts via tRNA-based rather than protein-based catalysis; rejects L-amino acids rather than detecting D-amino acids in the active site. By recycling D-aminoacyl-tRNA to D-amino acids and free tRNA molecules, this enzyme counteracts the toxicity associated with the formation of D-aminoacyl-tRNA entities in vivo and helps enforce protein L-homochirality. The chain is D-aminoacyl-tRNA deacylase from Haemophilus influenzae (strain 86-028NP).